Consider the following 1007-residue polypeptide: RNA-binding protein 26 (1007 aa).

Lys94 is covalently cross-linked (Glycyl lysine isopeptide (Lys-Gly) (interchain with G-Cter in SUMO2)). Residue Lys106 forms a Glycyl lysine isopeptide (Lys-Gly) (interchain with G-Cter in SUMO1); alternate linkage. Lys106 participates in a covalent cross-link: Glycyl lysine isopeptide (Lys-Gly) (interchain with G-Cter in SUMO2); alternate. The span at 106–118 shows a compositional bias: basic and acidic residues; sequence KKEEITKEEEREK. The disordered stretch occupies residues 106-241; it reads KKEEITKEEE…YTPVSSVPSI (136 aa). Residue Ser127 is modified to Phosphoserine. Basic and acidic residues predominate over residues 134-168; that stretch reads RYRENRSRDERKKDDRSRKRDYDRNPPRRDSYRDR. Basic residues predominate over residues 169–186; the sequence is YNRRRGRSRSYSRSRSRS. Basic and acidic residues-rich tracts occupy residues 187–201 and 209–227; these read WSKERLRERDRDRSR and RSRERDLVKPKYDLDRTDP. Residues 228 to 241 are compositionally biased toward polar residues; the sequence is LENNYTPVSSVPSI. The C3H1-type zinc finger occupies 288–316; sequence PMPKKRCRDYDEKGFCMRGDMCPFDHGSD. Positions 334–388 are enriched in pro residues; that stretch reads QPPVVEGPPPPGLPPPPPILTPPPVNLRPPVPPPGPLPPSLPPVTGPPPPLPPLQ. Disordered regions lie at residues 334-404 and 460-519; these read QPPV…SSVP and IGLT…TNSP. Over residues 394–404 the composition is skewed to low complexity; that stretch reads APPNSATSSVP. Ser496 bears the Phosphoserine mark. N6-acetyllysine is present on Lys510. Ser518 is modified (phosphoserine). Positions 532 to 606 constitute an RRM 1 domain; the sequence is TKLELRKVPP…RFIKVYWHRE (75 aa). Ser616 carries the phosphoserine modification. 2 coiled-coil regions span residues 719–795 and 823–847; these read DNNE…KAAS and KKMQAGEEVTELRRKYTELQLEAAK. The segment at 853 to 884 is disordered; the sequence is SGRGRGIHSRGRGAVHGRGRGRGRGRGVPGHA. The span at 857-877 shows a compositional bias: basic residues; that stretch reads RGIHSRGRGAVHGRGRGRGRG. The RRM 2 domain occupies 891–960; it reads RALEISAFTE…QDLKLAWNKP (70 aa). The tract at residues 966 to 1007 is disordered; it reads AVETEEVEPDEEEFQEESLVDDSLLQDDDEEEEDNESRSWRR. The span at 968–1000 shows a compositional bias: acidic residues; the sequence is ETEEVEPDEEEFQEESLVDDSLLQDDDEEEEDN.

Functionally, may be involved in the turnover of nuclear polyadenylated (pA+) RNA. In Homo sapiens (Human), this protein is RNA-binding protein 26.